The chain runs to 301 residues: Phosphatidylcholine:diacylglycerol cholinephosphotransferase 1 (301 aa).

The disordered stretch occupies residues M1–R39. The next 5 helical transmembrane spans lie at H88–L108, V141–W161, I171–L191, F202–I222, and G255–A275. Catalysis depends on residues H216, H256, and D260.

Belongs to the phosphatidylcholine:diacylglycerol cholinephosphotransferase family.

The protein localises to the membrane. The catalysed reaction is 1,2-ditetradecanoyl-sn-glycero-3-phosphocholine + 1,2-di-(9Z-octadecenoyl)-sn-glycerol = 1,2-ditetradecanoyl-sn-glycerol + 1,2-di-(9Z-octadecenoyl)-sn-glycero-3-phosphocholine. Functions as a phosphatidylcholine:diacylglycerol cholinephosphotransferase that catalyzes the transfer of the phosphocholine headgroup from phosphatidylcholine (PC) to diacylglycerol, a major reaction for the transfer of 18:1 into phosphatidylcholine for desaturation and also for the reverse transfer of 18:2 and 18:3 into the triacylglycerols synthesis pathway. The protein is Phosphatidylcholine:diacylglycerol cholinephosphotransferase 1 of Arabidopsis thaliana (Mouse-ear cress).